The chain runs to 138 residues: Probable lactoylglutathione lyase (138 aa).

The VOC domain maps to 5 to 129 (RILHTMLRVG…DGYMIELIQN (125 aa)). His-8 contributes to the Ni(2+) binding site. Residue Arg-12 coordinates substrate. Position 59 (Glu-59) interacts with Ni(2+). Substrate contacts are provided by Asn-63 and His-77. Ni(2+)-binding residues include His-77 and Glu-125. The Proton donor/acceptor role is filled by Glu-125.

Belongs to the glyoxalase I family. Ni(2+) is required as a cofactor.

The catalysed reaction is (R)-S-lactoylglutathione = methylglyoxal + glutathione. It functions in the pathway secondary metabolite metabolism; methylglyoxal degradation; (R)-lactate from methylglyoxal: step 1/2. Its function is as follows. Catalyzes the conversion of hemimercaptal, formed from methylglyoxal and glutathione, to S-lactoylglutathione. The sequence is that of Probable lactoylglutathione lyase (gloA) from Vibrio cholerae serotype O1 (strain ATCC 39315 / El Tor Inaba N16961).